The sequence spans 688 residues: Two-component response regulator ORR23 (688 aa).

One can recognise a Response regulatory domain in the interval 25-140; that stretch reads RVLAVDDDPV…ELRNIWQHVI (116 aa). Position 76 is a 4-aspartylphosphate (Asp-76). Residues 161-212 form a disordered region; it reads PPNADSDHVHGHVTCGSPDQSGRPSKKRKEYCSEEEDEGEVNTQDIDDPSAP. A compositionally biased stretch (acidic residues) spans 193–208; sequence SEEEDEGEVNTQDIDD. The segment at residues 211-270 is a DNA-binding region (myb-like GARP); that stretch reads APKKPRVVWSVELHRKFVAAVNQLGIDKAVPKRILELMNVEKLTRENVASHLQKYRLYLK.

Belongs to the ARR family. Type-B subfamily. In terms of processing, two-component system major event consists of a His-to-Asp phosphorelay between a sensor histidine kinase (HK) and a response regulator (RR). In plants, the His-to-Asp phosphorelay involves an additional intermediate named Histidine-containing phosphotransfer protein (HPt). This multistep phosphorelay consists of a His-Asp-His-Asp sequential transfer of a phosphate group between first a His and an Asp of the HK protein, followed by the transfer to a conserved His of the HPt protein and finally the transfer to an Asp in the receiver domain of the RR protein.

Its subcellular location is the nucleus. Transcriptional activator that binds specific DNA sequence. Functions as a response regulator involved in His-to-Asp phosphorelay signal transduction system. Phosphorylation of the Asp residue in the receiver domain activates the ability of the protein to promote the transcription of target genes. May directly activate some type-A response regulators in response to cytokinins. In Oryza sativa subsp. indica (Rice), this protein is Two-component response regulator ORR23.